Reading from the N-terminus, the 302-residue chain is Acetaldehyde dehydrogenase 1 (302 aa).

12–15 (SGNI) contacts NAD(+). The active-site Acyl-thioester intermediate is Cys127. NAD(+) is bound by residues 158–166 (SAGPGTRAN) and Asn277.

Belongs to the acetaldehyde dehydrogenase family.

It carries out the reaction acetaldehyde + NAD(+) + CoA = acetyl-CoA + NADH + H(+). The chain is Acetaldehyde dehydrogenase 1 from Mycobacteroides abscessus (strain ATCC 19977 / DSM 44196 / CCUG 20993 / CIP 104536 / JCM 13569 / NCTC 13031 / TMC 1543 / L948) (Mycobacterium abscessus).